Here is a 77-residue protein sequence, read N- to C-terminus: Large ribosomal subunit protein bL28 (77 aa).

This sequence belongs to the bacterial ribosomal protein bL28 family.

This Acidovorax ebreus (strain TPSY) (Diaphorobacter sp. (strain TPSY)) protein is Large ribosomal subunit protein bL28.